Consider the following 164-residue polypeptide: MDLLYFFLLIWPPYVANGSAVLANKFKIRHPIDFGKTFVDGRRIFGDGKTYEGFLIGLSTGTFIGYAPNLLYKHLSLLDAFVLSIAALLGDLFGAFIKRRLCMPRGYPAFPLDQLDFLLTSLAVYTLYKDISVEYIIAAVIITPLIHRITNYIAYYLRLKKEPW.

Transmembrane regions (helical) follow at residues 3 to 23, 51 to 71, 77 to 97, and 122 to 142; these read LLYFFLLIWPPYVANGSAVLA, YEGFLIGLSTGTFIGYAPNLL, LLDAFVLSIAALLGDLFGAFI, and LAVYTLYKDISVEYIIAAVII.

It belongs to the CDP-archaeol synthase family. It depends on Mg(2+) as a cofactor.

It is found in the cell membrane. It carries out the reaction 2,3-bis-O-(geranylgeranyl)-sn-glycerol 1-phosphate + CTP + H(+) = CDP-2,3-bis-O-(geranylgeranyl)-sn-glycerol + diphosphate. Its pathway is membrane lipid metabolism; glycerophospholipid metabolism. Its function is as follows. Catalyzes the formation of CDP-2,3-bis-(O-geranylgeranyl)-sn-glycerol (CDP-archaeol) from 2,3-bis-(O-geranylgeranyl)-sn-glycerol 1-phosphate (DGGGP) and CTP. This reaction is the third ether-bond-formation step in the biosynthesis of archaeal membrane lipids. The chain is CDP-archaeol synthase from Pyrobaculum islandicum (strain DSM 4184 / JCM 9189 / GEO3).